The primary structure comprises 360 residues: NAD(P)H-quinone oxidoreductase subunit 1, chloroplastic (360 aa).

Transmembrane regions (helical) follow at residues 27–47 (IWIF…VLVI), 98–118 (FSIG…VIPF), 129–149 (IGIF…LMSG), 165–185 (AAQS…ISLL), 203–223 (FWGW…ISSL), 248–268 (YSGI…LISS), 269–289 (LFVT…ISIL), 297–317 (IFGT…FLFI), and 340–360 (FLLP…LFSL).

Belongs to the complex I subunit 1 family. As to quaternary structure, NDH is composed of at least 16 different subunits, 5 of which are encoded in the nucleus.

The protein localises to the plastid. Its subcellular location is the chloroplast thylakoid membrane. It catalyses the reaction a plastoquinone + NADH + (n+1) H(+)(in) = a plastoquinol + NAD(+) + n H(+)(out). The enzyme catalyses a plastoquinone + NADPH + (n+1) H(+)(in) = a plastoquinol + NADP(+) + n H(+)(out). In terms of biological role, NDH shuttles electrons from NAD(P)H:plastoquinone, via FMN and iron-sulfur (Fe-S) centers, to quinones in the photosynthetic chain and possibly in a chloroplast respiratory chain. The immediate electron acceptor for the enzyme in this species is believed to be plastoquinone. Couples the redox reaction to proton translocation, and thus conserves the redox energy in a proton gradient. The polypeptide is NAD(P)H-quinone oxidoreductase subunit 1, chloroplastic (Nasturtium officinale (Watercress)).